Here is a 267-residue protein sequence, read N- to C-terminus: MKKTKTILDILKMKSDGEKITVLTCYDYATAGIMDGCGIDMILVGDSAGVVCAGYDNTLPVTMEEMIYHTKAVMRANPKALVVSDMPFLSYQIDLATARLNAGRLIKEAGAAAVKLEGGLNVVATIEAIVAMDVPVMGHIGLTPQSLHRMGGYRVQGRKDEQAEKLLADARAVEAAGAFAVVLEGIPMRLAERITRELTIPTIGIGAGPSCDGQVLVIHDILGLCEKYSPKFVKQYVDLKPIMAEAINSYIAEVKGGAFPTEGHSFH.

2 residues coordinate Mg(2+): Asp-46 and Asp-85. Residues 46 to 47 (DS), Asp-85, and Lys-115 each bind 3-methyl-2-oxobutanoate. Glu-117 is a Mg(2+) binding site. Glu-184 (proton acceptor) is an active-site residue.

This sequence belongs to the PanB family. Homodecamer; pentamer of dimers. Requires Mg(2+) as cofactor.

It is found in the cytoplasm. The enzyme catalyses 3-methyl-2-oxobutanoate + (6R)-5,10-methylene-5,6,7,8-tetrahydrofolate + H2O = 2-dehydropantoate + (6S)-5,6,7,8-tetrahydrofolate. Its pathway is cofactor biosynthesis; (R)-pantothenate biosynthesis; (R)-pantoate from 3-methyl-2-oxobutanoate: step 1/2. In terms of biological role, catalyzes the reversible reaction in which hydroxymethyl group from 5,10-methylenetetrahydrofolate is transferred onto alpha-ketoisovalerate to form ketopantoate. The chain is 3-methyl-2-oxobutanoate hydroxymethyltransferase from Geotalea uraniireducens (strain Rf4) (Geobacter uraniireducens).